Consider the following 89-residue polypeptide: Small ribosomal subunit protein uS15 (89 aa).

It belongs to the universal ribosomal protein uS15 family. Part of the 30S ribosomal subunit. Forms a bridge to the 50S subunit in the 70S ribosome, contacting the 23S rRNA.

Functionally, one of the primary rRNA binding proteins, it binds directly to 16S rRNA where it helps nucleate assembly of the platform of the 30S subunit by binding and bridging several RNA helices of the 16S rRNA. Forms an intersubunit bridge (bridge B4) with the 23S rRNA of the 50S subunit in the ribosome. The protein is Small ribosomal subunit protein uS15 of Lactobacillus helveticus (strain DPC 4571).